Here is a 61-residue protein sequence, read N- to C-terminus: Photosystem II reaction center protein K (61 aa).

Positions methionine 1 to alanine 24 are excised as a propeptide. Residues isoleucine 32–phenylalanine 52 form a helical membrane-spanning segment.

It belongs to the PsbK family. PSII is composed of 1 copy each of membrane proteins PsbA, PsbB, PsbC, PsbD, PsbE, PsbF, PsbH, PsbI, PsbJ, PsbK, PsbL, PsbM, PsbT, PsbX, PsbY, PsbZ, Psb30/Ycf12, at least 3 peripheral proteins of the oxygen-evolving complex and a large number of cofactors. It forms dimeric complexes.

The protein localises to the plastid. It is found in the chloroplast thylakoid membrane. One of the components of the core complex of photosystem II (PSII). PSII is a light-driven water:plastoquinone oxidoreductase that uses light energy to abstract electrons from H(2)O, generating O(2) and a proton gradient subsequently used for ATP formation. It consists of a core antenna complex that captures photons, and an electron transfer chain that converts photonic excitation into a charge separation. The chain is Photosystem II reaction center protein K from Sorghum bicolor (Sorghum).